The primary structure comprises 200 residues: UPF0637 protein LCK_01372 (200 aa).

Belongs to the UPF0637 family.

The protein is UPF0637 protein LCK_01372 of Leuconostoc citreum (strain KM20).